We begin with the raw amino-acid sequence, 254 residues long: D-aminoacyl-tRNA deacylase (254 aa).

The segment at lysine 61–proline 82 is disordered. Residues threonine 65–aspartate 74 show a composition bias toward polar residues.

Belongs to the DtdA deacylase family. In terms of assembly, monomer. Zn(2+) serves as cofactor.

It carries out the reaction a D-aminoacyl-tRNA + H2O = a tRNA + a D-alpha-amino acid + H(+). It catalyses the reaction glycyl-tRNA(Ala) + H2O = tRNA(Ala) + glycine + H(+). Functionally, D-aminoacyl-tRNA deacylase with broad substrate specificity. By recycling D-aminoacyl-tRNA to D-amino acids and free tRNA molecules, this enzyme counteracts the toxicity associated with the formation of D-aminoacyl-tRNA entities in vivo. The chain is D-aminoacyl-tRNA deacylase from Methanococcus maripaludis (strain DSM 14266 / JCM 13030 / NBRC 101832 / S2 / LL).